Consider the following 282-residue polypeptide: Glutamyl endopeptidase (282 aa).

Residues 1-27 (MKKRFLSICTMTIAALATTTMVNTSYA) form the signal peptide. The propeptide occupies 28-66 (KTDTESHNHSSLGTENKNVLDINSSSHNIKPSQNKSYPS). Residues histidine 117, aspartate 159, and serine 235 each act as charge relay system in the active site.

This sequence belongs to the peptidase S1B family. As to quaternary structure, monomer.

It localises to the secreted. The catalysed reaction is Preferential cleavage: Glu-|-Xaa, Asp-|-Xaa.. Inhibited by diisopropyl fluorophosphate. Functionally, exhibits a significant hydrolytic activity for the carbonyl side of glutamic acid. Shows activity toward human fibronectin and type 1 collagen. The protein is Glutamyl endopeptidase (gseA) of Staphylococcus epidermidis.